We begin with the raw amino-acid sequence, 54 residues long: MAVQQNRKTRSRRGMRRSHDALTAAQLSVDSTSGETHRRHHVTADGYYRGKKVI.

Residues 1-54 are disordered; the sequence is MAVQQNRKTRSRRGMRRSHDALTAAQLSVDSTSGETHRRHHVTADGYYRGKKVI. Basic residues predominate over residues 7–16; that stretch reads RKTRSRRGMR. The span at 25-34 shows a compositional bias: polar residues; sequence AQLSVDSTSG.

This sequence belongs to the bacterial ribosomal protein bL32 family.

This is Large ribosomal subunit protein bL32 from Tolumonas auensis (strain DSM 9187 / NBRC 110442 / TA 4).